A 504-amino-acid polypeptide reads, in one-letter code: Peptidyl-prolyl cis-trans isomerase-like 4 (504 aa).

A PPIase cyclophilin-type domain is found at 1–169 (MSVMLETSLG…QNIRIRHVEI (169 aa)). Positions 246–324 (NILFVCKLNP…RRIWVDFSQS (79 aa)) constitute an RRM domain. The segment covering 330–339 (RSMLSSSNPT) has biased composition (polar residues). Positions 330 to 504 (RSMLSSSNPT…RERDDRDRRR (175 aa)) are disordered. Gly residues predominate over residues 340–354 (GRGGRGGRGGRGGNY). Composition is skewed to basic and acidic residues over residues 356-381 (GRRD…DSRR) and 416-504 (SKRD…DRRR).

This sequence belongs to the cyclophilin-type PPIase family. PPIL4 subfamily.

The protein resides in the nucleus. The catalysed reaction is [protein]-peptidylproline (omega=180) = [protein]-peptidylproline (omega=0). Its function is as follows. PPIases accelerate the folding of proteins. It catalyzes the cis-trans isomerization of proline imidic peptide bonds in oligopeptides. This chain is Peptidyl-prolyl cis-trans isomerase-like 4 (CYP6), found in Cryptococcus neoformans var. neoformans serotype D (strain B-3501A) (Filobasidiella neoformans).